A 44-amino-acid chain; its full sequence is Photosystem I reaction center subunit IX (44 aa).

A helical transmembrane segment spans residues 7-27; that stretch reads YLSVAPVLSTLWFGALAGLLI.

Belongs to the PsaJ family.

The protein localises to the plastid. It localises to the chloroplast thylakoid membrane. May help in the organization of the PsaE and PsaF subunits. This is Photosystem I reaction center subunit IX from Solanum bulbocastanum (Wild potato).